A 189-amino-acid polypeptide reads, in one-letter code: Fine tangled pili major subunit (189 aa).

Belongs to the Dps family. In terms of assembly, hexamer.

It localises to the fimbrium. In terms of biological role, may contribute to bacterial adherence, or be involved in the protection of the bacteria, or both. This Haemophilus ducreyi (strain 35000HP / ATCC 700724) protein is Fine tangled pili major subunit (ftpA).